The following is a 245-amino-acid chain: 1-(5-phosphoribosyl)-5-[(5-phosphoribosylamino)methylideneamino] imidazole-4-carboxamide isomerase (245 aa).

Residue Asp11 is the Proton acceptor of the active site. Asp132 functions as the Proton donor in the catalytic mechanism.

The protein belongs to the HisA/HisF family.

It is found in the cytoplasm. It carries out the reaction 1-(5-phospho-beta-D-ribosyl)-5-[(5-phospho-beta-D-ribosylamino)methylideneamino]imidazole-4-carboxamide = 5-[(5-phospho-1-deoxy-D-ribulos-1-ylimino)methylamino]-1-(5-phospho-beta-D-ribosyl)imidazole-4-carboxamide. It participates in amino-acid biosynthesis; L-histidine biosynthesis; L-histidine from 5-phospho-alpha-D-ribose 1-diphosphate: step 4/9. This is 1-(5-phosphoribosyl)-5-[(5-phosphoribosylamino)methylideneamino] imidazole-4-carboxamide isomerase from Bacillus pumilus (strain SAFR-032).